Here is a 503-residue protein sequence, read N- to C-terminus: Annexin A11 (503 aa).

2 stretches are compositionally biased toward pro residues: residues 80–117 and 123–167; these read GYPP…PGMP and PGAP…PVPS. Residues 80–172 form a disordered region; that stretch reads GYPPVPPGGF…QPVPSYPGYS (93 aa). Annexin repeat units lie at residues 198 to 269, 270 to 341, 353 to 425, and 429 to 500; these read FDPL…ALMK, TPVL…SLSQ, SLVQ…AVVK, and NTPA…KICG. N6-acetyllysine is present on residues K246 and K253. The residue at position 477 (K477) is an N6-acetyllysine.

The protein belongs to the annexin family. In terms of assembly, interacts with S100A6. Interacts with PDCD6 in a calcium-dependent manner. Interacts with KIF23 during cytokinesis.

The protein localises to the cytoplasm. It is found in the melanosome. It localises to the nucleus envelope. The protein resides in the nucleus. Its subcellular location is the nucleoplasm. The protein localises to the cytoskeleton. It is found in the spindle. Required for midbody formation and completion of the terminal phase of cytokinesis. Binds specifically to calcyclin in a calcium-dependent manner. This chain is Annexin A11 (Anxa11), found in Mus musculus (Mouse).